A 1035-amino-acid polypeptide reads, in one-letter code: MHLIKPSWLSHSGEQKDFEVYSCHVSPDGKRLATAGGDGHVRVWSVEAIFNSHDRNYTKPRQLCHMSHHLGTIHSVRFSPNGRYLASGADDKIICIYHLDSNPPSHTSTFGTNEPPPVENWKTYKRLVGHDNDVQDLAWSPDNSLLVSVGLDSKIVVWSGHTFEKLKTLAVHQSHVKGITFDPANKFFATASDDRTIKIFRYTAPAPNATQHDMVNNFILETSISVPFKHSPLTTYFRRCSWSPDGNHIAAANAVNGPVSSIAIIERTGWDSEINLIGHEAPTEVCMFSPRLFYTQKPDENSNANGAASPGLVTVIASAGQDKTLTIWNTNTSRPVLIVQDIASKSVSDLAWTPDGQTVFAASLDGGVIAAQFETGELGWVAKSEENDKALQKYGGSRKGMGTAEDVDGLHLENHSKEKELRGAESRMGALMGDPGPAQKETATTTNGVKPAGKAADTNGTTTPAPPEKPEEESADKTAERIAELKSRVTITKDGKKRVAPLLVSSSGTGLSSLPQAQLVGASSTKPVQNDNPQTILDLSKPYDGLPRGGIAAMLLGNKRKAVIVEDEEEEEPSAKRSATGPVPIVVNGVEGLEPAPLSAPAHGLVPTPEFLRPAVISPNIAYSQVRLAVPKIRSHILRPLERGVLQEETSLEDATKVPENIVLEAKNPAHIREPARITATKRGALLWQDFLPRAIILVAGSKHFWAAACEDGTLHTWSPAGRRLMNAIMLESQPVILEARDSWLLCVTAVGLCHVYNIKTMSSPHPPVSLAPILDVAMTSLSPHGATPAPGVTSAHLNSSGVIVVTLSNGDGFYYSTSLYAWQRLSESWWAVGSQYWNSNDSSVSALQTTAVGPVSGAKNGEGETNVSAGIIPYLERHTTTEFLLKGRAYTLQRLVKALLARDGFENFESSVSIAHLENRIAGAFALGAREEFRLYLFMYAKRIGAENQKTKVEELLNSLIGGVLRDADDGEGWFSKQDKLCGWDRKDLLQGVVLILGKFRDLHRLTVQYARILDMTLGDEEKETTDEGMEVED.

7 WD repeats span residues Gln-15–Asp-54, His-68–Thr-107, Gly-129–Thr-168, Val-171–Thr-210, Pro-232–Asn-275, Asp-299–Ile-338, and Ile-342–Lys-383. The disordered stretch occupies residues Lys-393–Ala-479. Basic and acidic residues predominate over residues Asp-408–Glu-425.

It belongs to the WD repeat HIR1 family.

Its subcellular location is the nucleus. Its function is as follows. Required for replication-independent chromatin assembly and for the periodic repression of histone gene transcription during the cell cycle. This is Protein hir-1 (hir-1) from Neurospora crassa (strain ATCC 24698 / 74-OR23-1A / CBS 708.71 / DSM 1257 / FGSC 987).